Reading from the N-terminus, the 136-residue chain is Cell division protein SepF 3 (136 aa).

The protein belongs to the SepF family. As to quaternary structure, homodimer. Interacts with FtsZ.

It is found in the cytoplasm. Cell division protein that is part of the divisome complex and is recruited early to the Z-ring. Probably stimulates Z-ring formation, perhaps through the cross-linking of FtsZ protofilaments. Its function overlaps with FtsA. The protein is Cell division protein SepF 3 of Streptomyces coelicolor (strain ATCC BAA-471 / A3(2) / M145).